Here is a 334-residue protein sequence, read N- to C-terminus: Phosphate acyltransferase (334 aa).

The protein belongs to the PlsX family. In terms of assembly, homodimer. Probably interacts with PlsY.

It is found in the cytoplasm. It catalyses the reaction a fatty acyl-[ACP] + phosphate = an acyl phosphate + holo-[ACP]. The protein operates within lipid metabolism; phospholipid metabolism. In terms of biological role, catalyzes the reversible formation of acyl-phosphate (acyl-PO(4)) from acyl-[acyl-carrier-protein] (acyl-ACP). This enzyme utilizes acyl-ACP as fatty acyl donor, but not acyl-CoA. The polypeptide is Phosphate acyltransferase (Fervidobacterium nodosum (strain ATCC 35602 / DSM 5306 / Rt17-B1)).